The following is a 254-amino-acid chain: Imidazole glycerol phosphate synthase subunit HisF (254 aa).

Residues Asp-11 and Asp-130 contribute to the active site.

This sequence belongs to the HisA/HisF family. Heterodimer of HisH and HisF.

The protein localises to the cytoplasm. It carries out the reaction 5-[(5-phospho-1-deoxy-D-ribulos-1-ylimino)methylamino]-1-(5-phospho-beta-D-ribosyl)imidazole-4-carboxamide + L-glutamine = D-erythro-1-(imidazol-4-yl)glycerol 3-phosphate + 5-amino-1-(5-phospho-beta-D-ribosyl)imidazole-4-carboxamide + L-glutamate + H(+). It participates in amino-acid biosynthesis; L-histidine biosynthesis; L-histidine from 5-phospho-alpha-D-ribose 1-diphosphate: step 5/9. Its function is as follows. IGPS catalyzes the conversion of PRFAR and glutamine to IGP, AICAR and glutamate. The HisF subunit catalyzes the cyclization activity that produces IGP and AICAR from PRFAR using the ammonia provided by the HisH subunit. The polypeptide is Imidazole glycerol phosphate synthase subunit HisF (Chromobacterium violaceum (strain ATCC 12472 / DSM 30191 / JCM 1249 / CCUG 213 / NBRC 12614 / NCIMB 9131 / NCTC 9757 / MK)).